Here is a 397-residue protein sequence, read N- to C-terminus: tRNA(Met) cytidine acetate ligase (397 aa).

Residues 7–20 (VTEY…HIYH), glycine 101, asparagine 152, and arginine 177 each bind ATP.

Belongs to the TmcAL family.

The protein localises to the cytoplasm. The enzyme catalyses cytidine(34) in elongator tRNA(Met) + acetate + ATP = N(4)-acetylcytidine(34) in elongator tRNA(Met) + AMP + diphosphate. In terms of biological role, catalyzes the formation of N(4)-acetylcytidine (ac(4)C) at the wobble position of elongator tRNA(Met), using acetate and ATP as substrates. First activates an acetate ion to form acetyladenylate (Ac-AMP) and then transfers the acetyl group to tRNA to form ac(4)C34. The protein is tRNA(Met) cytidine acetate ligase of Leuconostoc citreum (strain KM20).